Reading from the N-terminus, the 231-residue chain is Quercetin 2,3-dioxygenase (231 aa).

A divalent metal cation-binding residues include His57, His59, His101, and Glu103.

Belongs to the pirin family. The cofactor is Zn(2+). Co(2+) serves as cofactor. Fe(2+) is required as a cofactor.

It catalyses the reaction quercetin + O2 = 2-(3,4-dihydroxybenzoyloxy)-4,6-dihydroxybenzoate + CO. It functions in the pathway flavonoid metabolism; quercetin degradation. Has quercetin 2,3-dioxygenase activity in vitro. Its physiological role is unknown; however, may provide a mechanism that would avoid inhibition of key cellular proteins, such as DNA gyrase, by quercetin. This chain is Quercetin 2,3-dioxygenase (yhhW), found in Escherichia coli O157:H7.